Consider the following 125-residue polypeptide: Large ribosomal subunit protein bL20 (125 aa).

This sequence belongs to the bacterial ribosomal protein bL20 family.

Its function is as follows. Binds directly to 23S ribosomal RNA and is necessary for the in vitro assembly process of the 50S ribosomal subunit. It is not involved in the protein synthesizing functions of that subunit. The sequence is that of Large ribosomal subunit protein bL20 from Zymomonas mobilis subsp. mobilis (strain ATCC 31821 / ZM4 / CP4).